The sequence spans 219 residues: Orotate phosphoribosyltransferase (219 aa).

Lys-26 is a 5-phospho-alpha-D-ribose 1-diphosphate binding site. 34 to 35 is an orotate binding site; the sequence is FF. 5-phospho-alpha-D-ribose 1-diphosphate contacts are provided by residues 72–73, Arg-98, Lys-99, Lys-102, His-104, and 124–132; these read YK and DDVITAGTA. Positions 128 and 156 each coordinate orotate.

Belongs to the purine/pyrimidine phosphoribosyltransferase family. PyrE subfamily. As to quaternary structure, homodimer. Mg(2+) serves as cofactor.

The enzyme catalyses orotidine 5'-phosphate + diphosphate = orotate + 5-phospho-alpha-D-ribose 1-diphosphate. Its pathway is pyrimidine metabolism; UMP biosynthesis via de novo pathway; UMP from orotate: step 1/2. Its function is as follows. Catalyzes the transfer of a ribosyl phosphate group from 5-phosphoribose 1-diphosphate to orotate, leading to the formation of orotidine monophosphate (OMP). In Stenotrophomonas maltophilia (strain R551-3), this protein is Orotate phosphoribosyltransferase.